The chain runs to 66 residues: Large ribosomal subunit protein uL29 (66 aa).

Belongs to the universal ribosomal protein uL29 family.

The polypeptide is Large ribosomal subunit protein uL29 (Agrobacterium fabrum (strain C58 / ATCC 33970) (Agrobacterium tumefaciens (strain C58))).